The chain runs to 86 residues: Putative defensin-like protein 9 (86 aa).

The signal sequence occupies residues 1 to 29 (MKSSMQLISTLFFLVILVVAPGMKMVVEG). Glutamine 30 bears the Pyrrolidone carboxylic acid mark. Intrachain disulfides connect cysteine 34–cysteine 79, cysteine 45–cysteine 65, cysteine 51–cysteine 73, and cysteine 55–cysteine 75.

Belongs to the DEFL family.

Its subcellular location is the secreted. The protein is Putative defensin-like protein 9 (LCR76) of Arabidopsis thaliana (Mouse-ear cress).